The chain runs to 379 residues: tRNA-specific 2-thiouridylase MnmA (379 aa).

Residues 6 to 13 (AMSGGVDS) and Leu-32 each bind ATP. Catalysis depends on Cys-101, which acts as the Nucleophile. Cys-101 and Cys-199 are joined by a disulfide. ATP is bound at residue Gly-125. The interval 148–150 (KDQ) is interaction with tRNA. The active-site Cysteine persulfide intermediate is the Cys-199.

The protein belongs to the MnmA/TRMU family.

It is found in the cytoplasm. The enzyme catalyses S-sulfanyl-L-cysteinyl-[protein] + uridine(34) in tRNA + AH2 + ATP = 2-thiouridine(34) in tRNA + L-cysteinyl-[protein] + A + AMP + diphosphate + H(+). Its function is as follows. Catalyzes the 2-thiolation of uridine at the wobble position (U34) of tRNA, leading to the formation of s(2)U34. This chain is tRNA-specific 2-thiouridylase MnmA, found in Paenarthrobacter aurescens (strain TC1).